The chain runs to 102 residues: Pole-localizer protein TmaR (102 aa).

Residues 7-34 (IINQARRKNKLKRELQDNQKKIRDNQKR) are a coiled coil.

This sequence belongs to the pole-localizer TmaR family.

It localises to the cytoplasm. In terms of biological role, pole-localizer protein involved in the regulation of several cellular processes. The sequence is that of Pole-localizer protein TmaR from Aliivibrio fischeri (strain ATCC 700601 / ES114) (Vibrio fischeri).